The primary structure comprises 586 residues: Pyruvate kinase (586 aa).

Arg32 contacts substrate. Residues Asn34, Ser36, Asp66, and Thr67 each contribute to the K(+) site. 34-37 (NFSH) provides a ligand contact to ATP. Arg73 and Lys156 together coordinate ATP. Glu222 contributes to the Mg(2+) binding site. Residues Gly245, Asp246, and Thr278 each coordinate substrate. Asp246 serves as a coordination point for Mg(2+).

The protein belongs to the pyruvate kinase family. This sequence in the C-terminal section; belongs to the PEP-utilizing enzyme family. It depends on Mg(2+) as a cofactor. The cofactor is K(+).

The enzyme catalyses pyruvate + ATP = phosphoenolpyruvate + ADP + H(+). It functions in the pathway carbohydrate degradation; glycolysis; pyruvate from D-glyceraldehyde 3-phosphate: step 5/5. This chain is Pyruvate kinase (pyk), found in Staphylococcus saprophyticus subsp. saprophyticus (strain ATCC 15305 / DSM 20229 / NCIMB 8711 / NCTC 7292 / S-41).